The sequence spans 187 residues: Large ribosomal subunit protein bL12cx (187 aa).

The transit peptide at 1-54 (MASTTLSIATTIRSSSPLTSASTHHFLSKPTAIEFPFRLSSSSSHRAINLRPIS) directs the protein to the chloroplast.

The protein belongs to the bacterial ribosomal protein bL12 family.

The protein resides in the plastid. It is found in the chloroplast. The protein is Large ribosomal subunit protein bL12cx (RPL12C) of Arabidopsis thaliana (Mouse-ear cress).